The primary structure comprises 658 residues: Sodium/nucleoside cotransporter 1 (658 aa).

Over 1–75 the chain is Cytoplasmic; that stretch reads MEKASGRKSL…ARTFCQRHAS (75 aa). The helical transmembrane segment at 76 to 99 threads the bilayer; that stretch reads LFKKILLGLLCLAYAAYFLAACIL. The Extracellular portion of the chain corresponds to 100-104; it reads DFQRA. The chain crosses the membrane as a helical span at residues 105–123; that stretch reads LALFVITCLVILVLLLHFL. Over 124-142 the chain is Cytoplasmic; that stretch reads KKFLGKKLTRCLKPFKNSQ. The helical transmembrane segment at 143-162 threads the bilayer; that stretch reads LRLWIKRVFAGVSLVGLILW. Residues 163-173 lie on the Extracellular side of the membrane; that stretch reads LALDTAQRPEQ. The chain crosses the membrane as a helical span at residues 174 to 190; sequence LISFAGICMFVLILFAC. At 191-196 the chain is on the cytoplasmic side; sequence SKHHSA. A helical transmembrane segment spans residues 197 to 217; the sequence is VSWRTVFWGLGLQFVFGLLVI. Topologically, residues 218–256 are extracellular; that stretch reads RTDPGFIAFQWLGDQVQIFLAYTVAGSSFVLGDTLVNDV. Residues 257 to 278 traverse the membrane as a helical segment; it reads FAFQSLPIIIFFGCVMSILYYL. Residues 279–289 lie on the Cytoplasmic side of the membrane; sequence GLVQWVVQKIA. The chain crosses the membrane as a helical span at residues 290–313; sequence WFLQVTMRTTATETLAVAGNIFVG. At 314–332 the chain is on the extracellular side; it reads MTEAPLLIRPYLADLTLSE. Residues 333–355 form a helical membrane-spanning segment; sequence IHAVMTSGFATISGTVLGAFISF. Topologically, residues 356–361 are cytoplasmic; that stretch reads GIDASS. A helical transmembrane segment spans residues 362–381; the sequence is LISASVMGAPCALALSKLVY. At 382–418 the chain is on the extracellular side; it reads PEEEESKFKSKEGVKLPRGKESNVLEAASNGATDAIA. A helical membrane pass occupies residues 419–441; that stretch reads LVANVAANLVAFLAVLAFINAAL. Over 442–452 the chain is Cytoplasmic; it reads SWLGELVDIQG. The helical transmembrane segment at 453 to 474 threads the bilayer; sequence LTFQVICSYILRPMVYMMGVEW. The Extracellular segment spans residues 475–529; the sequence is TDCPMVAEMVGIKFFTNEFVAYQQLSQYKKKRLSGMEEWIDGQKQWISVRAEVIT. The chain crosses the membrane as a helical span at residues 530 to 553; sequence TFSLCGFANLSSIGITLGGLTSMV. Residues 554–564 lie on the Cytoplasmic side of the membrane; sequence PHRKSDLSKVV. The chain crosses the membrane as a helical span at residues 565 to 587; it reads IRALFTGSCVSFISACVAGILYV. The Extracellular segment spans residues 588 to 658; sequence PRGAETDCVS…CGFYNNTVCA (71 aa). N-linked (GlcNAc...) asparagine glycosylation is present at Asn653.

The protein belongs to the concentrative nucleoside transporter (CNT) (TC 2.A.41) family. Post-translationally, N-glycosylated. N-glycosylation is required for localization to the plasma membrane and the transporter activity.

The protein localises to the cell membrane. It is found in the apical cell membrane. It carries out the reaction uridine(out) + Na(+)(out) = uridine(in) + Na(+)(in). The catalysed reaction is thymidine(out) + Na(+)(out) = thymidine(in) + Na(+)(in). It catalyses the reaction cytidine(out) + Na(+)(out) = cytidine(in) + Na(+)(in). The enzyme catalyses adenosine(out) + Na(+)(out) = adenosine(in) + Na(+)(in). Its activity is regulated as follows. Due to its high apparent affinity but slow transport, adenosine could act as a negative regulator of pyrimidine transport under some conditions. In terms of biological role, sodium and pyrimidine nucleoside symporter of the plasma membrane that imports uridine, thymidine and cytidine into cells by coupling their transport to the transmembrane sodium electrochemical gradient. Also transports adenosine, an atypical substrate transported with high apparent affinity, but low maximum velocity. Therefore, exhibits the transport characteristics of the nucleoside transport system cit or N2 subtype (N2/cit). Involved in renal nucleoside (re)absorption. This is Sodium/nucleoside cotransporter 1 (SLC28A1) from Oryctolagus cuniculus (Rabbit).